Consider the following 35-residue polypeptide: 30 kDa neutral phosphatase (35 aa).

Polar residues predominate over residues 1–28; the sequence is KSSAEVQQTQQASIPASQKANLGNQNNI. The disordered stretch occupies residues 1–35; it reads KSSAEVQQTQQASIPASQKANLGNQNNIMXVAXYQ.

In terms of biological role, highly cationic enzyme that can bind human or rat immunoglobulins as well as serum albumin, and could therefore be involved in post-infectious sequelae. The protein is 30 kDa neutral phosphatase of Staphylococcus aureus.